The primary structure comprises 325 residues: Biotin synthase (325 aa).

Residues 36–254 (NEVQLAMLLS…IALARIMFPK (219 aa)) form the Radical SAM core domain. Residues Cys-51, Cys-55, and Cys-58 each coordinate [4Fe-4S] cluster. Residues Cys-95, Cys-126, Cys-186, and Arg-258 each coordinate [2Fe-2S] cluster.

It belongs to the radical SAM superfamily. Biotin synthase family. In terms of assembly, homodimer. The cofactor is [4Fe-4S] cluster. [2Fe-2S] cluster is required as a cofactor.

The catalysed reaction is (4R,5S)-dethiobiotin + (sulfur carrier)-SH + 2 reduced [2Fe-2S]-[ferredoxin] + 2 S-adenosyl-L-methionine = (sulfur carrier)-H + biotin + 2 5'-deoxyadenosine + 2 L-methionine + 2 oxidized [2Fe-2S]-[ferredoxin]. Its pathway is cofactor biosynthesis; biotin biosynthesis; biotin from 7,8-diaminononanoate: step 2/2. Functionally, catalyzes the conversion of dethiobiotin (DTB) to biotin by the insertion of a sulfur atom into dethiobiotin via a radical-based mechanism. The polypeptide is Biotin synthase (Neorickettsia sennetsu (strain ATCC VR-367 / Miyayama) (Ehrlichia sennetsu)).